The primary structure comprises 948 residues: ATP-dependent RNA helicase DBP10 (948 aa).

Acidic residues-rich tracts occupy residues 1–13 (MTMS…DVEN) and 27–60 (ELGS…DDDG). A disordered region spans residues 1 to 80 (MTMSDIEDSD…PTKKAKLDRK (80 aa)). The Q motif signature appears at 121–149 (GSFASFGFSKFLLANIAKKGYKQPTPIQR). Positions 152–323 (IPLIIDNRDV…KAGLTNPVLV (172 aa)) constitute a Helicase ATP-binding domain. 165–172 (ARTGSGKT) provides a ligand contact to ATP. The DEAD box signature appears at 271-274 (DEAD). Disordered stretches follow at residues 378-408 (RSIE…ERMP) and 849-948 (EWRK…SRRK). Residues 395–404 (GKKRKYKFKK) are compositionally biased toward basic residues. The Helicase C-terminal domain maps to 395-552 (GKKRKYKFKK…SMHEAKCELL (158 aa)). Positions 856 to 868 (LKPTSSLTNNETP) are enriched in polar residues. 2 stretches are compositionally biased toward basic and acidic residues: residues 884–903 (LPDK…EKAL) and 922–938 (KSTE…EQRR). Residues 939–948 (AKNARPSRRK) show a composition bias toward basic residues.

Belongs to the DEAD box helicase family. DDX54/DBP10 subfamily.

Its subcellular location is the nucleus. It localises to the nucleolus. The enzyme catalyses ATP + H2O = ADP + phosphate + H(+). In terms of biological role, ATP-binding RNA helicase involved in the biogenesis of 60S ribosomal subunits and is required for the normal formation of 25S and 5.8S rRNAs. The polypeptide is ATP-dependent RNA helicase DBP10 (DBP10) (Lodderomyces elongisporus (strain ATCC 11503 / CBS 2605 / JCM 1781 / NBRC 1676 / NRRL YB-4239) (Yeast)).